The chain runs to 118 residues: MSTLYDNIGGQPAIEQVVDELHKRIATDSLLAPVFAGTDMVKQRNHLVAFLAQIFEGPKQYGGRPMDKTHAGLNLQQPHFDAIAKHLGERMAVRGVSAENTKAALDRVTNMKGAILNK.

His70 provides a ligand contact to heme.

It belongs to the truncated hemoglobin family. Group I subfamily. Monomer. Heme is required as a cofactor.

The protein resides in the membrane. This Nostoc commune protein is Group 1 truncated hemoglobin GlbN (glbN).